A 77-amino-acid polypeptide reads, in one-letter code: Cysteine-rich protein 1 (77 aa).

One can recognise an LIM zinc-binding domain in the interval 2–63 (PKCPKCSKEV…HPCYAAMFGP (62 aa)). 2 positions are modified to N6-acetyllysine: lysine 9 and lysine 22. At arginine 68 the chain carries Omega-N-methylarginine.

Its function is as follows. Seems to have a role in zinc absorption and may function as an intracellular zinc transport protein. The chain is Cysteine-rich protein 1 (CRIP1) from Bos taurus (Bovine).